Reading from the N-terminus, the 249-residue chain is Tryptophan synthase alpha chain (249 aa).

Residues E43 and D54 each act as proton acceptor in the active site.

Belongs to the TrpA family. As to quaternary structure, tetramer of two alpha and two beta chains.

The catalysed reaction is (1S,2R)-1-C-(indol-3-yl)glycerol 3-phosphate + L-serine = D-glyceraldehyde 3-phosphate + L-tryptophan + H2O. It functions in the pathway amino-acid biosynthesis; L-tryptophan biosynthesis; L-tryptophan from chorismate: step 5/5. Its function is as follows. The alpha subunit is responsible for the aldol cleavage of indoleglycerol phosphate to indole and glyceraldehyde 3-phosphate. The protein is Tryptophan synthase alpha chain of Campylobacter jejuni subsp. jejuni serotype O:23/36 (strain 81-176).